We begin with the raw amino-acid sequence, 515 residues long: 2-isopropylmalate synthase (515 aa).

A Pyruvate carboxyltransferase domain is found at 5 to 267 (VIIFDTTLRD…RTGINHEEIH (263 aa)). 4 residues coordinate Mn(2+): D14, H202, H204, and N238. Residues 392–515 (KLNYLSVQSG…EMKQKKIATV (124 aa)) are regulatory domain.

The protein belongs to the alpha-IPM synthase/homocitrate synthase family. LeuA type 1 subfamily. Homodimer. Requires Mn(2+) as cofactor.

It is found in the cytoplasm. It carries out the reaction 3-methyl-2-oxobutanoate + acetyl-CoA + H2O = (2S)-2-isopropylmalate + CoA + H(+). It functions in the pathway amino-acid biosynthesis; L-leucine biosynthesis; L-leucine from 3-methyl-2-oxobutanoate: step 1/4. Functionally, catalyzes the condensation of the acetyl group of acetyl-CoA with 3-methyl-2-oxobutanoate (2-ketoisovalerate) to form 3-carboxy-3-hydroxy-4-methylpentanoate (2-isopropylmalate). This is 2-isopropylmalate synthase from Vibrio vulnificus (strain CMCP6).